The sequence spans 209 residues: Kynurenine formamidase (209 aa).

Trp-20 serves as a coordination point for substrate. Zn(2+)-binding residues include His-50, His-54, and Asp-56. Catalysis depends on His-60, which acts as the Proton donor/acceptor. 2 residues coordinate Zn(2+): His-161 and Glu-173.

It belongs to the Cyclase 1 superfamily. KynB family. In terms of assembly, homodimer. It depends on Zn(2+) as a cofactor.

The enzyme catalyses N-formyl-L-kynurenine + H2O = L-kynurenine + formate + H(+). Its pathway is amino-acid degradation; L-tryptophan degradation via kynurenine pathway; L-kynurenine from L-tryptophan: step 2/2. In terms of biological role, catalyzes the hydrolysis of N-formyl-L-kynurenine to L-kynurenine, the second step in the kynurenine pathway of tryptophan degradation. This is Kynurenine formamidase from Bacillus anthracis.